A 399-amino-acid polypeptide reads, in one-letter code: MNHLLKQAKRVASECECGHEHQWIEMDELQLGRNAINYLPEYLHEKGLLHVTIVADANTYAVAGQLVAQLLKGRGIDVENCILKEQGALTLLADEHGLGQLVIGAAKETDVFLAVGAGTIHDLTRIASYKFGKPFIAIPTAPSVDGFTSMGAPVIRDGVKITFQTQAPIALFADLDFLTQAPRSMVAAGFGDMLGKSTSLVDWQVSHMLNDEPFCPAVFHMTKSALTMCMEHADEIAACNEQGIRLLTEALIMSGLAMLIFGHSHPASGAEHHLSHYWEMAFLRSGGTQPLHGAKVGYATMLISALYKNEARKKIETFQGEGSPLVNSIHKHRERLLMLIDTIPESSDIQRLLESVGGAVKSADLALADSLEDEALEKAHKLRERCTLLYCLNEHLKTS.

NAD(+)-binding positions include D56, 118 to 122 (GTIHD), and 140 to 143 (TAPS). D145 contacts substrate. S149 is a binding site for NAD(+). D192 contacts substrate. 2 residues coordinate Ni(2+): D192 and H272. Residue H276 coordinates substrate. H292 provides a ligand contact to Ni(2+).

Belongs to the glycerol-1-phosphate dehydrogenase family. Homodimer. The cofactor is Ni(2+).

The protein localises to the cytoplasm. The catalysed reaction is sn-glycerol 1-phosphate + NAD(+) = dihydroxyacetone phosphate + NADH + H(+). It carries out the reaction sn-glycerol 1-phosphate + NADP(+) = dihydroxyacetone phosphate + NADPH + H(+). Catalyzes the NAD(P)H-dependent reduction of dihydroxyacetonephosphate (DHAP or glycerone phosphate) to glycerol 1-phosphate (G1P). The G1P thus generated is probably used for the synthesis of phosphoglycerolipids in Gram-positive bacterial species. The sequence is that of Glycerol-1-phosphate dehydrogenase [NAD(P)+] from Halalkalibacterium halodurans (strain ATCC BAA-125 / DSM 18197 / FERM 7344 / JCM 9153 / C-125) (Bacillus halodurans).